Reading from the N-terminus, the 288-residue chain is Homoserine kinase (288 aa).

ATP is bound at residue 79–89; that stretch reads PPARGLGSSSA.

Belongs to the GHMP kinase family. Homoserine kinase subfamily.

It is found in the cytoplasm. It catalyses the reaction L-homoserine + ATP = O-phospho-L-homoserine + ADP + H(+). It participates in amino-acid biosynthesis; L-threonine biosynthesis; L-threonine from L-aspartate: step 4/5. In terms of biological role, catalyzes the ATP-dependent phosphorylation of L-homoserine to L-homoserine phosphate. This is Homoserine kinase from Listeria monocytogenes serotype 4b (strain CLIP80459).